The following is a 69-amino-acid chain: uncharacterized protein (69 aa).

The next 2 membrane-spanning stretches (helical) occupy residues 15–35 (LIIG…ICYV) and 36–56 (LYII…IPKT).

Its subcellular location is the cell membrane. This is an uncharacterized protein from Methanocaldococcus jannaschii (strain ATCC 43067 / DSM 2661 / JAL-1 / JCM 10045 / NBRC 100440) (Methanococcus jannaschii).